The primary structure comprises 634 residues: BTB/POZ domain-containing protein At1g03010 (634 aa).

Positions 38–103 (SDLTVQVGSS…CYGINIEINL (66 aa)) constitute a BTB domain. Residues 205–503 (DWWGKSLAVL…VQVLYFEQIR (299 aa)) form the NPH3 domain. Position 444 is a phosphotyrosine (Tyr-444). A coiled-coil region spans residues 542–580 (RDNYASVRRENRELKLEVARMRMRLTDLEKDHISIKQEL).

The protein belongs to the NPH3 family.

It functions in the pathway protein modification; protein ubiquitination. In terms of biological role, may act as a substrate-specific adapter of an E3 ubiquitin-protein ligase complex (CUL3-RBX1-BTB) which mediates the ubiquitination and subsequent proteasomal degradation of target proteins. This is BTB/POZ domain-containing protein At1g03010 from Arabidopsis thaliana (Mouse-ear cress).